The chain runs to 841 residues: Nuclear RNA export factor 2 (841 aa).

The interval 1–285 (MPNQMRVLDF…NFELVDGKPF (285 aa)) is RNA-binding unit probably involved in Piwi-dependent recruitment and single-stranded RNA-PPNP complex formation. 3 LRR repeats span residues 200–221 (RLNGFILSNNRIRDIRPLTLLA), 224–245 (DYALLDLRGNKIKSAERLCRAL), and 249–270 (RARELLLENNPIVKISNFPANI). Positions 286–553 (NMLHKIFSPL…EYVRAVKEVF (268 aa)) are necessary for silencing function. Residues 325–408 (WHAFMIPDPS…IFRYYLRMNV (84 aa)) form the RRM domain. LRR repeat units lie at residues 475–496 (TCSEIRLCHNKVLVLDGAHVLG), 500–521 (CLRAVDLSHNWVQDLSSIHSLG), and 524–545 (PLKSLVLHGNKLCRNYRLPSEY). Positions 585–758 (LVGAFLENYL…LKIANERLHI (174 aa)) constitute an NTF2 domain. The TAP-C domain maps to 788–841 (DVKDHKLLLFQEVTGLISTWVTSIVEEADWDFERALKLFIQKNADHEIPDLAFA).

It belongs to the NXF family. In the ovaries, part of a complex composed of at least Panx, nxf2, piwi and Nxt1. The complex is knowns as Panx-induced cotranscriptional silencing (PICTS) complex, Panx-nxf2-dependent TAP/p15 silencing (Pandas complex), SFiNX (silencing factor interacting nuclear export variant) or piwi-Panx-nxf2-p15 (PPNP) complex. Interacts (via TAP-C domain) with Panx (via NIR region); the interaction is direct. Interacts (via NTF2 domain) with Nxt1; the interaction is direct and prevents Nxt1 binding to nucleoporins. Interacts with sbr/Nxf1. Expressed in female gonads (at protein level). Expressed ubiquitously.

The protein localises to the cytoplasm. It is found in the nucleus. It localises to the nucleoplasm. Functionally, may be involved in the export of mRNA from the nucleus to the cytoplasm. In the ovaries, forms a complex with nxf2, piwi and Nxt1 which acts as effectors of cotranscriptional transposon silencing. On recruitment to a target transcript, interacts with single stranded RNA, thereby anchoring the complex via the nascent target transcript to chromatin and allowing Panx to recruit silencing effectors to establishing repressive heterochromatin at transposon loci. Does not affect piRNA biogenesis. The interaction with Panx stabilizes the nuclear protein complex. Does not bind nucleoporins, but regulates sbr/Nxf1 binding to nucleoporins and, indirectly, transposon exports. The polypeptide is Nuclear RNA export factor 2 (nxf2) (Drosophila melanogaster (Fruit fly)).